The primary structure comprises 336 residues: Anthranilate phosphoribosyltransferase (336 aa).

Residues Gly-82, 85–86 (GD), Thr-90, 92–95 (NIST), 110–118 (KHGNRSVSS), and Ser-122 each bind 5-phospho-alpha-D-ribose 1-diphosphate. Gly-82 contributes to the anthranilate binding site. Ser-94 serves as a coordination point for Mg(2+). Asn-113 is a binding site for anthranilate. Arg-168 provides a ligand contact to anthranilate. Positions 227 and 228 each coordinate Mg(2+).

The protein belongs to the anthranilate phosphoribosyltransferase family. Homodimer. It depends on Mg(2+) as a cofactor.

The catalysed reaction is N-(5-phospho-beta-D-ribosyl)anthranilate + diphosphate = 5-phospho-alpha-D-ribose 1-diphosphate + anthranilate. It participates in amino-acid biosynthesis; L-tryptophan biosynthesis; L-tryptophan from chorismate: step 2/5. Its function is as follows. Catalyzes the transfer of the phosphoribosyl group of 5-phosphorylribose-1-pyrophosphate (PRPP) to anthranilate to yield N-(5'-phosphoribosyl)-anthranilate (PRA). The polypeptide is Anthranilate phosphoribosyltransferase (Leptospira interrogans serogroup Icterohaemorrhagiae serovar copenhageni (strain Fiocruz L1-130)).